A 380-amino-acid chain; its full sequence is 1-deoxy-D-xylulose 5-phosphate reductoisomerase 2 (380 aa).

S10, G11, S12, I13, G36, K37, N38, and N120 together coordinate NADPH. Residue K121 coordinates 1-deoxy-D-xylulose 5-phosphate. NADPH is bound at residue E122. D146 is a binding site for Mn(2+). Residues S147, E148, S172, and H195 each contribute to the 1-deoxy-D-xylulose 5-phosphate site. A Mn(2+)-binding site is contributed by E148. G201 is an NADPH binding site. 1-deoxy-D-xylulose 5-phosphate-binding residues include S208, N213, K214, and E217. E217 provides a ligand contact to Mn(2+).

Belongs to the DXR family. Requires Mg(2+) as cofactor. It depends on Mn(2+) as a cofactor.

It catalyses the reaction 2-C-methyl-D-erythritol 4-phosphate + NADP(+) = 1-deoxy-D-xylulose 5-phosphate + NADPH + H(+). Its pathway is isoprenoid biosynthesis; isopentenyl diphosphate biosynthesis via DXP pathway; isopentenyl diphosphate from 1-deoxy-D-xylulose 5-phosphate: step 1/6. In terms of biological role, catalyzes the NADPH-dependent rearrangement and reduction of 1-deoxy-D-xylulose-5-phosphate (DXP) to 2-C-methyl-D-erythritol 4-phosphate (MEP). In Bacillus anthracis, this protein is 1-deoxy-D-xylulose 5-phosphate reductoisomerase 2.